Reading from the N-terminus, the 545-residue chain is CTP synthase (545 aa).

The amidoligase domain stretch occupies residues 1-266 (MTTRYIFVTG…DDLVVKRFGL (266 aa)). A CTP-binding site is contributed by serine 14. A UTP-binding site is contributed by serine 14. ATP contacts are provided by residues 15–20 (SLGKGI) and aspartate 72. Residues aspartate 72 and glutamate 140 each contribute to the Mg(2+) site. CTP contacts are provided by residues 147–149 (DIE), 187–192 (KTKPTQ), and lysine 223. Residues 187–192 (KTKPTQ) and lysine 223 contribute to the UTP site. Position 239-241 (239-241 (KDV)) interacts with ATP. The Glutamine amidotransferase type-1 domain occupies 291–542 (VIGMVGKYIE…IAAASAHQKR (252 aa)). Residue glycine 352 participates in L-glutamine binding. Cysteine 379 acts as the Nucleophile; for glutamine hydrolysis in catalysis. Residues 380–383 (LGMQ), glutamate 403, and arginine 470 each bind L-glutamine. Residues histidine 515 and glutamate 517 contribute to the active site.

This sequence belongs to the CTP synthase family. As to quaternary structure, homotetramer.

The enzyme catalyses UTP + L-glutamine + ATP + H2O = CTP + L-glutamate + ADP + phosphate + 2 H(+). It carries out the reaction L-glutamine + H2O = L-glutamate + NH4(+). The catalysed reaction is UTP + NH4(+) + ATP = CTP + ADP + phosphate + 2 H(+). It functions in the pathway pyrimidine metabolism; CTP biosynthesis via de novo pathway; CTP from UDP: step 2/2. Its activity is regulated as follows. Allosterically activated by GTP, when glutamine is the substrate; GTP has no effect on the reaction when ammonia is the substrate. The allosteric effector GTP functions by stabilizing the protein conformation that binds the tetrahedral intermediate(s) formed during glutamine hydrolysis. Inhibited by the product CTP, via allosteric rather than competitive inhibition. Its function is as follows. Catalyzes the ATP-dependent amination of UTP to CTP with either L-glutamine or ammonia as the source of nitrogen. Regulates intracellular CTP levels through interactions with the four ribonucleotide triphosphates. This is CTP synthase from Shewanella baltica (strain OS223).